A 303-amino-acid chain; its full sequence is Probable porphobilinogen deaminase (303 aa).

Cysteine 240 carries the S-(dipyrrolylmethanemethyl)cysteine modification.

The protein belongs to the HMBS family. Requires dipyrromethane as cofactor.

The catalysed reaction is 4 porphobilinogen + H2O = hydroxymethylbilane + 4 NH4(+). It functions in the pathway porphyrin-containing compound metabolism; protoporphyrin-IX biosynthesis; coproporphyrinogen-III from 5-aminolevulinate: step 2/4. Functionally, tetrapolymerization of the monopyrrole PBG into the hydroxymethylbilane pre-uroporphyrinogen in several discrete steps. This Hyperthermus butylicus (strain DSM 5456 / JCM 9403 / PLM1-5) protein is Probable porphobilinogen deaminase.